The following is a 251-amino-acid chain: Probable transcriptional regulatory protein MLBr00475 (251 aa).

Belongs to the TACO1 family.

The protein resides in the cytoplasm. This chain is Probable transcriptional regulatory protein MLBr00475, found in Mycobacterium leprae (strain Br4923).